Reading from the N-terminus, the 132-residue chain is Small ribosomal subunit protein uS11 (132 aa).

This sequence belongs to the universal ribosomal protein uS11 family. In terms of assembly, part of the 30S ribosomal subunit. Interacts with proteins S7 and S18. Binds to IF-3.

In terms of biological role, located on the platform of the 30S subunit, it bridges several disparate RNA helices of the 16S rRNA. Forms part of the Shine-Dalgarno cleft in the 70S ribosome. This is Small ribosomal subunit protein uS11 from Clostridium botulinum (strain 657 / Type Ba4).